A 675-amino-acid chain; its full sequence is Mitochondrial distribution and morphology protein 12 (675 aa).

Residues 1–675 enclose the SMP-LTD domain; that stretch reads MSIDLNWDTV…VYPSFWTFLV (675 aa). 5 disordered regions span residues 66 to 186, 241 to 270, 307 to 327, 365 to 390, and 444 to 517; these read LPDF…GTNH, GPSW…GAGG, GTGK…PLGT, TGPR…VAPA, and PKQG…RFRE. Residues 78–101 show a composition bias toward acidic residues; that stretch reads SSEESDSEEEVAYENEGEYLDDPV. The span at 123 to 137 shows a compositional bias: low complexity; sequence NSSTGSRNGSGPNSG. A compositionally biased stretch (gly residues) spans 261–270; the sequence is GGAGGGGAGG. Over residues 317–327 the composition is skewed to low complexity; the sequence is PLTGTSTPLGT. 2 stretches are compositionally biased toward polar residues: residues 373–382 and 454–469; these read PSSQSLNSVG and VSTL…NNRA. The segment covering 497–510 has biased composition (acidic residues); sequence EPEEDEEEEEEGEE.

This sequence belongs to the MDM12 family. As to quaternary structure, component of the ER-mitochondria encounter structure (ERMES) or MDM complex, composed of mmm-1, mdm10, mdm12 and mdm34. A mmm-1 homodimer associates with one molecule of mdm12 on each side in a pairwise head-to-tail manner, and the SMP-LTD domains of mmm-1 and mdm12 generate a continuous hydrophobic tunnel for phospholipid trafficking.

It localises to the mitochondrion outer membrane. It is found in the endoplasmic reticulum membrane. Its function is as follows. Component of the ERMES/MDM complex, which serves as a molecular tether to connect the endoplasmic reticulum (ER) and mitochondria. Components of this complex are involved in the control of mitochondrial shape and protein biogenesis, and function in nonvesicular lipid trafficking between the ER and mitochondria. Mdm12 is required for the interaction of the ER-resident membrane protein MMM1 and the outer mitochondrial membrane-resident beta-barrel protein mdm10. The mdm12-mmm-1 subcomplex functions in the major beta-barrel assembly pathway that is responsible for biogenesis of all mitochondrial outer membrane beta-barrel proteins, and acts in a late step after the SAM complex. The mdm10-mdm12-mmm-1 subcomplex further acts in the TOM40-specific pathway after the action of the mdm12-mmm1 complex. Essential for establishing and maintaining the structure of mitochondria and maintenance of mtDNA nucleoids. This chain is Mitochondrial distribution and morphology protein 12, found in Neurospora crassa (strain ATCC 24698 / 74-OR23-1A / CBS 708.71 / DSM 1257 / FGSC 987).